The chain runs to 403 residues: Nuclear receptor subfamily 2 group F member 5 (403 aa).

The tract at residues 16 to 44 (PGSQLQMCSQEPGGTPGTPSGSTPGNDAL) is disordered. The segment at residues 51–126 (NVDCMVCGDK…VGMRREAVQR (76 aa)) is a DNA-binding region (nuclear receptor). 2 NR C4-type zinc fingers span residues 54–74 (CMVC…CEGC) and 90–114 (CRGN…LKKC). The NR LBD domain maps to 152 to 378 (YLSGFISLLL…TLLRDMLLSG (227 aa)).

It belongs to the nuclear hormone receptor family. NR2 subfamily.

The protein resides in the nucleus. Its function is as follows. Putative receptor that is required in photoreceptor cells precursors during eye development. This chain is Nuclear receptor subfamily 2 group F member 5 (nr2f5), found in Danio rerio (Zebrafish).